The following is a 213-amino-acid chain: Thymidine kinase (213 aa).

Residues 22 to 29 and 94 to 97 contribute to the ATP site; these read GSMFSGKT and DEAQ. The active-site Proton acceptor is E95. 4 residues coordinate Zn(2+): C151, C154, C183, and C186. The interval 185-213 is disordered; sequence RCFQPPRPTSTSSLKAPAPAATAPRPELP. The span at 193–213 shows a compositional bias: low complexity; sequence TSTSSLKAPAPAATAPRPELP.

The protein belongs to the thymidine kinase family. Homotetramer.

The protein localises to the cytoplasm. The catalysed reaction is thymidine + ATP = dTMP + ADP + H(+). This Rhodothermus sp. (strain ITI 518) protein is Thymidine kinase.